A 79-amino-acid polypeptide reads, in one-letter code: UPF0180 protein BCB4264_A1446 (79 aa).

This sequence belongs to the UPF0180 family.

The protein is UPF0180 protein BCB4264_A1446 of Bacillus cereus (strain B4264).